Reading from the N-terminus, the 178-residue chain is MYHRLILLALVGTTMANVIPFSMNNIPEEYKEFIPEEVRNFYKDLTVEDKEILRELASKHATFANEDAALEALKDKSDKLYKNAVELRNFVKAKIDSLKPDAKIFVDEIIAKARSLRSDDGHKLDTEKIKQAARDIIAKYQALSEETKEELKVTFPAIAKIIGNEKLKRNASTFLQKN.

The first 16 residues, 1 to 16, serve as a signal peptide directing secretion; it reads MYHRLILLALVGTTMA. 2 coiled-coil regions span residues 67 to 89 and 130 to 153; these read DAAL…ELRN and KQAA…ELKV.

This sequence belongs to the fatty-acid and retinol-binding protein (FARBP) family. Post-translationally, not glycosylated.

Its subcellular location is the secreted. Its function is as follows. Binds retinol and different fatty acids. This is Fatty-acid and retinol-binding protein 1 from Brugia pahangi (Filarial nematode worm).